The following is a 927-amino-acid chain: Translation initiation factor IF-2 (927 aa).

Residues 27–338 (LGLPVKSHAS…APKPVTERKF (312 aa)) form a disordered region. Polar residues predominate over residues 49–69 (SFSSSKTKAPTNSVQTNQGVK). 2 stretches are compositionally biased toward basic and acidic residues: residues 70 to 86 (TESK…DDKP) and 101 to 138 (FKAE…DRRH). Positions 146 to 159 (GNRNDNRQGQQNNR) are enriched in low complexity. 3 stretches are compositionally biased toward basic and acidic residues: residues 160-171 (NKNDGRYADHKQ), 202-226 (YSRH…EQEL), and 234-257 (AQEE…KEIV). Low complexity predominate over residues 300–316 (NWNNQNQVRNQRNSNWN). Residues 428 to 597 (ERPPVVTIMG…LLVAEMEELK (170 aa)) enclose the tr-type G domain. Residues 437–444 (GHVDHGKT) are G1. Residue 437–444 (GHVDHGKT) coordinates GTP. The G2 stretch occupies residues 462-466 (GITQH). Residues 483–486 (DTPG) are G3. GTP-binding positions include 483-487 (DTPGH) and 537-540 (NKID). A G4 region spans residues 537 to 540 (NKID). Positions 573-575 (SAK) are G5.

Belongs to the TRAFAC class translation factor GTPase superfamily. Classic translation factor GTPase family. IF-2 subfamily.

The protein resides in the cytoplasm. Its function is as follows. One of the essential components for the initiation of protein synthesis. Protects formylmethionyl-tRNA from spontaneous hydrolysis and promotes its binding to the 30S ribosomal subunits. Also involved in the hydrolysis of GTP during the formation of the 70S ribosomal complex. This is Translation initiation factor IF-2 from Streptococcus agalactiae serotype Ia (strain ATCC 27591 / A909 / CDC SS700).